We begin with the raw amino-acid sequence, 63 residues long: Actiflagelin (63 aa).

5 disulfides stabilise this stretch: cysteine 3/cysteine 24, cysteine 6/cysteine 11, cysteine 17/cysteine 39, cysteine 43/cysteine 55, and cysteine 56/cysteine 61. Residue proline 63 is modified to Proline amide.

Contains 5 disulfide bonds. In terms of tissue distribution, expressed by the venom gland.

It is found in the secreted. Its function is as follows. Unknown. In vitro, this toxin activates sperm motility when tested on OF1 male mice. This Walterinnesia aegyptia (Desert black snake) protein is Actiflagelin.